Consider the following 175-residue polypeptide: Ribulose bisphosphate carboxylase small subunit, chloroplastic 2 (175 aa).

Residues 1–46 (MAPTVMASSATSVAPFQGLKSTAGLPVSRRSTNSGFGNVSNGGRIK) constitute a chloroplast transit peptide.

This sequence belongs to the RuBisCO small chain family. Heterohexadecamer of 8 large and 8 small subunits.

The protein localises to the plastid. It localises to the chloroplast. In terms of biological role, ruBisCO catalyzes two reactions: the carboxylation of D-ribulose 1,5-bisphosphate, the primary event in carbon dioxide fixation, as well as the oxidative fragmentation of the pentose substrate. Both reactions occur simultaneously and in competition at the same active site. Although the small subunit is not catalytic it is essential for maximal activity. This is Ribulose bisphosphate carboxylase small subunit, chloroplastic 2 from Oryza sativa subsp. japonica (Rice).